The chain runs to 137 residues: UPF0275 protein PM0489 (137 aa).

The protein belongs to the UPF0275 family.

This Pasteurella multocida (strain Pm70) protein is UPF0275 protein PM0489.